Reading from the N-terminus, the 168-residue chain is 3-isopropylmalate dehydratase small subunit (168 aa).

The protein belongs to the LeuD family. LeuD type 2 subfamily. Heterodimer of LeuC and LeuD.

It catalyses the reaction (2R,3S)-3-isopropylmalate = (2S)-2-isopropylmalate. The protein operates within amino-acid biosynthesis; L-leucine biosynthesis; L-leucine from 3-methyl-2-oxobutanoate: step 2/4. Functionally, catalyzes the isomerization between 2-isopropylmalate and 3-isopropylmalate, via the formation of 2-isopropylmaleate. In Thermodesulfovibrio yellowstonii (strain ATCC 51303 / DSM 11347 / YP87), this protein is 3-isopropylmalate dehydratase small subunit.